We begin with the raw amino-acid sequence, 427 residues long: Forkhead box protein A1-B (427 aa).

Positions 157–251 (KPPYSYISLI…ENGCYLRRQK (95 aa)) form a DNA-binding region, fork-head. Basic and acidic residues predominate over residues 256-272 (EKTQGGKGNQDGRKDHS). A disordered region spans residues 256–336 (EKTQGGKGNQ…HQNHSTHSLA (81 aa)). Positions 285–302 (SSQMDSSSSMSNPSSSPQ) are enriched in low complexity. Positions 323-334 (PLSSHQNHSTHS) are enriched in polar residues.

As to expression, present in the vegetal pole and marginal zone but not the animal pole of gastrulae and in equal levels in the dorsal and ventral halves of both gastrulae and neurulae. At neurula stage, expressed in the notochord. During tailbud stages, expressed in the foregut, brain, hypocord, neural floor plate and in two lines of cells just dorsal and ventral to the notochord. Expressed in the adult liver.

It localises to the nucleus. Its function is as follows. Probable transcription factor. The protein is Forkhead box protein A1-B (foxa1-b) of Xenopus laevis (African clawed frog).